The sequence spans 228 residues: MIRLGGWCARRLCSAAVPAGRRGAAGGLGLAGGRALRVLVDMDGVLADFEGGFLRKFRARFPDQPFIALEDRRGFWVSEQYGRLRPGLSEKAISIWESKNFFFELEPLPGAVEAVKEMASLQNTDVFICTSPIKMFKYCPYEKYAWVEKYFGPDFLEQIVLTRDKTVVSADLLIDDRPDITGAEPTPSWEHVLFTACHNQHLQLQPPRRRLHSWADDWKAILDSKRPC.

A mitochondrion-targeting transit peptide spans 1-31 (MIRLGGWCARRLCSAAVPAGRRGAAGGLGLA). Asp-41 acts as the Nucleophile in catalysis. The Mg(2+) site is built by Asp-41 and Asp-43. The active-site Proton donor is the Asp-43. Positions 43, 49, 75, 76, 77, 96, 130, and 165 each coordinate substrate. Asp-176 contributes to the Mg(2+) binding site.

The protein belongs to the 5'(3')-deoxyribonucleotidase family. In terms of assembly, homodimer. Mg(2+) is required as a cofactor. As to expression, highly expressed in heart, brain and skeletal muscle. Detected at very low levels in kidney and pancreas.

The protein resides in the mitochondrion. Dephosphorylates specifically the 5' and 2'(3')-phosphates of uracil and thymine deoxyribonucleotides, and so protects mitochondrial DNA replication from excess dTTP. Has only marginal activity towards dIMP and dGMP. The protein is 5'(3')-deoxyribonucleotidase, mitochondrial (NT5M) of Homo sapiens (Human).